Reading from the N-terminus, the 226-residue chain is MRIAELTALLHLASPALPIGAFSYSQGLEAAIEAQLITDADSAREWIASGLTDVLARGELPFLAHQMERWRTHDAESLRVANSEFLASRESAELRRETEQMGWSLRQLCVSLEWGDADRRATLASMTPLAQPTAFAFAAYAHDAAVDATLAAYAFSWVENQAAAALKAVPLGQLAGQRIIVALREPIDAAVTRALATSPDNINTFAPQLGILSARHESQYSRLFRS.

This sequence belongs to the UreF family. UreD, UreF and UreG form a complex that acts as a GTP-hydrolysis-dependent molecular chaperone, activating the urease apoprotein by helping to assemble the nickel containing metallocenter of UreC. The UreE protein probably delivers the nickel.

Its subcellular location is the cytoplasm. Required for maturation of urease via the functional incorporation of the urease nickel metallocenter. This chain is Urease accessory protein UreF, found in Paraburkholderia xenovorans (strain LB400).